A 299-amino-acid chain; its full sequence is Acetylglutamate kinase (299 aa).

Residues 72–73, R94, and N196 each bind substrate; that span reads GG.

Belongs to the acetylglutamate kinase family. ArgB subfamily.

It is found in the cytoplasm. The catalysed reaction is N-acetyl-L-glutamate + ATP = N-acetyl-L-glutamyl 5-phosphate + ADP. Its pathway is amino-acid biosynthesis; L-arginine biosynthesis; N(2)-acetyl-L-ornithine from L-glutamate: step 2/4. Functionally, catalyzes the ATP-dependent phosphorylation of N-acetyl-L-glutamate. This chain is Acetylglutamate kinase, found in Burkholderia thailandensis (strain ATCC 700388 / DSM 13276 / CCUG 48851 / CIP 106301 / E264).